The chain runs to 212 residues: Octanoyltransferase (212 aa).

The region spanning Gly33 to Asp212 is the BPL/LPL catalytic domain. Residues Arg72–His79, Ala144–Gly146, and Gly157–Ala159 contribute to the substrate site. Residue Cys175 is the Acyl-thioester intermediate of the active site.

This sequence belongs to the LipB family.

The protein resides in the cytoplasm. The enzyme catalyses octanoyl-[ACP] + L-lysyl-[protein] = N(6)-octanoyl-L-lysyl-[protein] + holo-[ACP] + H(+). The protein operates within protein modification; protein lipoylation via endogenous pathway; protein N(6)-(lipoyl)lysine from octanoyl-[acyl-carrier-protein]: step 1/2. Catalyzes the transfer of endogenously produced octanoic acid from octanoyl-acyl-carrier-protein onto the lipoyl domains of lipoate-dependent enzymes. Lipoyl-ACP can also act as a substrate although octanoyl-ACP is likely to be the physiological substrate. The polypeptide is Octanoyltransferase (Paramagnetospirillum magneticum (strain ATCC 700264 / AMB-1) (Magnetospirillum magneticum)).